The following is a 959-amino-acid chain: DNA-directed RNA polymerase subunit beta'' (959 aa).

Zn(2+) is bound by residues C211, C288, C295, and C298.

This sequence belongs to the RNA polymerase beta' chain family. RpoC2 subfamily. In plastids the minimal PEP RNA polymerase catalytic core is composed of four subunits: alpha, beta, beta', and beta''. When a (nuclear-encoded) sigma factor is associated with the core the holoenzyme is formed, which can initiate transcription. Zn(2+) serves as cofactor.

The protein localises to the plastid. The protein resides in the apicoplast. It carries out the reaction RNA(n) + a ribonucleoside 5'-triphosphate = RNA(n+1) + diphosphate. Functionally, DNA-dependent RNA polymerase catalyzes the transcription of DNA into RNA using the four ribonucleoside triphosphates as substrates. The protein is DNA-directed RNA polymerase subunit beta'' of Plasmodium falciparum (isolate 3D7).